We begin with the raw amino-acid sequence, 371 residues long: UDP-N-acetylglucosamine--N-acetylmuramyl-(pentapeptide) pyrophosphoryl-undecaprenol N-acetylglucosamine transferase (371 aa).

Residues 15–17, Asn-126, Arg-172, Ser-199, Ile-256, 275–280, and Gln-301 each bind UDP-N-acetyl-alpha-D-glucosamine; these read TGG and ALTVSE.

Belongs to the glycosyltransferase 28 family. MurG subfamily.

It localises to the cell inner membrane. It catalyses the reaction di-trans,octa-cis-undecaprenyl diphospho-N-acetyl-alpha-D-muramoyl-L-alanyl-D-glutamyl-meso-2,6-diaminopimeloyl-D-alanyl-D-alanine + UDP-N-acetyl-alpha-D-glucosamine = di-trans,octa-cis-undecaprenyl diphospho-[N-acetyl-alpha-D-glucosaminyl-(1-&gt;4)]-N-acetyl-alpha-D-muramoyl-L-alanyl-D-glutamyl-meso-2,6-diaminopimeloyl-D-alanyl-D-alanine + UDP + H(+). The protein operates within cell wall biogenesis; peptidoglycan biosynthesis. In terms of biological role, cell wall formation. Catalyzes the transfer of a GlcNAc subunit on undecaprenyl-pyrophosphoryl-MurNAc-pentapeptide (lipid intermediate I) to form undecaprenyl-pyrophosphoryl-MurNAc-(pentapeptide)GlcNAc (lipid intermediate II). This is UDP-N-acetylglucosamine--N-acetylmuramyl-(pentapeptide) pyrophosphoryl-undecaprenol N-acetylglucosamine transferase from Francisella tularensis subsp. tularensis (strain FSC 198).